The primary structure comprises 292 residues: uncharacterized protein (292 aa).

Residues 1–59 form the HTH lysR-type domain; it reads MTITQLKVFVKIAETGSFTKAGQALNMTQPAVSHAISAIEAELDVKLIIRDRRNGLMLT. Positions 18–37 form a DNA-binding region, H-T-H motif; the sequence is FTKAGQALNMTQPAVSHAIS.

Belongs to the LysR transcriptional regulatory family.

This is an uncharacterized protein from Bacillus subtilis (strain 168).